Reading from the N-terminus, the 221-residue chain is Octanoyltransferase (221 aa).

A BPL/LPL catalytic domain is found at 35–221 (ESYENRIIFC…RELLAALLSK (187 aa)). Residues 80-87 (RGGDITYH), 152-154 (AIG), and 165-167 (GLA) each bind substrate. Catalysis depends on C183, which acts as the Acyl-thioester intermediate.

This sequence belongs to the LipB family.

Its subcellular location is the cytoplasm. It catalyses the reaction octanoyl-[ACP] + L-lysyl-[protein] = N(6)-octanoyl-L-lysyl-[protein] + holo-[ACP] + H(+). It functions in the pathway protein modification; protein lipoylation via endogenous pathway; protein N(6)-(lipoyl)lysine from octanoyl-[acyl-carrier-protein]: step 1/2. Its function is as follows. Catalyzes the transfer of endogenously produced octanoic acid from octanoyl-acyl-carrier-protein onto the lipoyl domains of lipoate-dependent enzymes. Lipoyl-ACP can also act as a substrate although octanoyl-ACP is likely to be the physiological substrate. This Bacteroides fragilis (strain ATCC 25285 / DSM 2151 / CCUG 4856 / JCM 11019 / LMG 10263 / NCTC 9343 / Onslow / VPI 2553 / EN-2) protein is Octanoyltransferase.